Here is a 219-residue protein sequence, read N- to C-terminus: Transmembrane protein 17B (219 aa).

A glycan (N-linked (GlcNAc...) asparagine) is linked at Asn-26. 4 helical membrane passes run 51 to 71 (MMLYFNAFFFPFWIISEIITM), 84 to 104 (ILLTTSLVILTLVESLRLYIG), 116 to 136 (LAGFLILTLLIQLPLLLFLLT), and 147 to 167 (LAVHMIYLMFINAEIVISFLV). 2 N-linked (GlcNAc...) asparagine glycosylation sites follow: Asn-195 and Asn-203.

This sequence belongs to the TMEM17 family. As to quaternary structure, part of the tectonic-like complex (also named B9 complex).

It localises to the cell projection. The protein resides in the cilium membrane. In terms of biological role, transmembrane component of the tectonic-like complex, a complex localized at the transition zone of primary cilia and acting as a barrier that prevents diffusion of transmembrane proteins between the cilia and plasma membranes. Required for ciliogenesis and sonic hedgehog/SHH signaling. The chain is Transmembrane protein 17B (Tmem17-b) from Xenopus tropicalis (Western clawed frog).